The sequence spans 318 residues: Lipoyl synthase (318 aa).

The [4Fe-4S] cluster site is built by Cys-64, Cys-69, Cys-75, Cys-90, Cys-94, Cys-97, and Ser-304. A Radical SAM core domain is found at 76 to 293 (FSGGTATFMI…AEEGYKMGFK (218 aa)).

The protein belongs to the radical SAM superfamily. Lipoyl synthase family. [4Fe-4S] cluster is required as a cofactor.

It is found in the cytoplasm. The catalysed reaction is [[Fe-S] cluster scaffold protein carrying a second [4Fe-4S](2+) cluster] + N(6)-octanoyl-L-lysyl-[protein] + 2 oxidized [2Fe-2S]-[ferredoxin] + 2 S-adenosyl-L-methionine + 4 H(+) = [[Fe-S] cluster scaffold protein] + N(6)-[(R)-dihydrolipoyl]-L-lysyl-[protein] + 4 Fe(3+) + 2 hydrogen sulfide + 2 5'-deoxyadenosine + 2 L-methionine + 2 reduced [2Fe-2S]-[ferredoxin]. Its pathway is protein modification; protein lipoylation via endogenous pathway; protein N(6)-(lipoyl)lysine from octanoyl-[acyl-carrier-protein]: step 2/2. Its function is as follows. Catalyzes the radical-mediated insertion of two sulfur atoms into the C-6 and C-8 positions of the octanoyl moiety bound to the lipoyl domains of lipoate-dependent enzymes, thereby converting the octanoylated domains into lipoylated derivatives. In Pseudomonas syringae pv. tomato (strain ATCC BAA-871 / DC3000), this protein is Lipoyl synthase.